A 122-amino-acid polypeptide reads, in one-letter code: Large ribosomal subunit protein uL14 (122 aa).

The protein belongs to the universal ribosomal protein uL14 family. In terms of assembly, part of the 50S ribosomal subunit. Forms a cluster with proteins L3 and L19. In the 70S ribosome, L14 and L19 interact and together make contacts with the 16S rRNA in bridges B5 and B8.

In terms of biological role, binds to 23S rRNA. Forms part of two intersubunit bridges in the 70S ribosome. This is Large ribosomal subunit protein uL14 from Nitrosomonas europaea (strain ATCC 19718 / CIP 103999 / KCTC 2705 / NBRC 14298).